The sequence spans 360 residues: MLVYLAEYLTQFYTGFNVFSYVTFRAILGLMTALMFSLWWGPKMIERLQMLQIGQIVRNDGPESHFSKRGTPTMGGILILAGVFISVLLWGDLGSRYVWVVLFVLASFGLIGFIDDYRKVVRKDTKGLIAKWKYILQSLAALVIAFYLYASADMTGETQLVVPFFKDIMPQLGGFFIVLAYFTIVGSSNAVNLTDGLDGLAIMPTVMVAAAFALIAYLSGHVQFANYLHLPYLPGAGELVIVCTAIVGAGLGFLWFNTYPAQVFMGDVGSLSLGAALGAIAVLVRQEILLVIMGGVFVMETVSVILQVGSYKLRGQRIFRMAPIHHHYELKGWPEPRVIVRFWIISLFLVLLGLATLKLR.

Helical transmembrane passes span 21–41 (YVTFRAILGLMTALMFSLWWG), 74–94 (MGGILILAGVFISVLLWGDLG), 97–117 (YVWVVLFVLASFGLIGFIDDY), 134–154 (YILQSLAALVIAFYLYASADM), 168–188 (IMPQLGGFFIVLAYFTIVGSS), 199–219 (GLAIMPTVMVAAAFALIAYLS), 236–256 (AGELVIVCTAIVGAGLGFLWF), 263–283 (VFMGDVGSLSLGAALGAIAVL), 288–308 (ILLVIMGGVFVMETVSVILQV), and 338–358 (VIVRFWIISLFLVLLGLATLK).

The protein belongs to the glycosyltransferase 4 family. MraY subfamily. It depends on Mg(2+) as a cofactor.

The protein resides in the cell inner membrane. It catalyses the reaction UDP-N-acetyl-alpha-D-muramoyl-L-alanyl-gamma-D-glutamyl-meso-2,6-diaminopimeloyl-D-alanyl-D-alanine + di-trans,octa-cis-undecaprenyl phosphate = di-trans,octa-cis-undecaprenyl diphospho-N-acetyl-alpha-D-muramoyl-L-alanyl-D-glutamyl-meso-2,6-diaminopimeloyl-D-alanyl-D-alanine + UMP. It functions in the pathway cell wall biogenesis; peptidoglycan biosynthesis. Catalyzes the initial step of the lipid cycle reactions in the biosynthesis of the cell wall peptidoglycan: transfers peptidoglycan precursor phospho-MurNAc-pentapeptide from UDP-MurNAc-pentapeptide onto the lipid carrier undecaprenyl phosphate, yielding undecaprenyl-pyrophosphoryl-MurNAc-pentapeptide, known as lipid I. The protein is Phospho-N-acetylmuramoyl-pentapeptide-transferase of Shewanella woodyi (strain ATCC 51908 / MS32).